Here is a 388-residue protein sequence, read N- to C-terminus: Processive diacylglycerol beta-glucosyltransferase (388 aa).

The protein belongs to the glycosyltransferase 28 family. UgtP subfamily.

It localises to the cell membrane. It catalyses the reaction a 1,2-diacyl-3-O-(beta-D-glucopyranosyl)-sn-glycerol + UDP-alpha-D-glucose = a 1,2-diacyl-3-O-(beta-D-Glc-(1-&gt;6)-beta-D-Glc)-sn-glycerol + UDP + H(+). It carries out the reaction a 1,2-diacyl-3-O-(beta-D-Glc-(1-&gt;6)-beta-D-Glc)-sn-glycerol + UDP-alpha-D-glucose = a 1,2-diacyl-3-O-(beta-D-Glc-(1-&gt;6)-beta-D-Glc-(1-&gt;6)-beta-D-Glc)-sn-glycerol + UDP + H(+). The catalysed reaction is a 1,2-diacyl-sn-glycerol + UDP-alpha-D-glucose = a 1,2-diacyl-3-O-(beta-D-glucopyranosyl)-sn-glycerol + UDP + H(+). It participates in glycolipid metabolism; diglucosyl-diacylglycerol biosynthesis. Its function is as follows. Processive glucosyltransferase involved in the biosynthesis of both the bilayer- and non-bilayer-forming membrane glucolipids. Is able to successively transfer up to three glucosyl residues to diacylglycerol (DAG), thereby catalyzing the formation of beta-monoglucosyl-DAG (3-O-(beta-D-glucopyranosyl)-1,2-diacyl-sn-glycerol), beta-diglucosyl-DAG (3-O-(beta-D-glucopyranosyl-beta-(1-&gt;6)-D-glucopyranosyl)-1,2-diacyl-sn-glycerol) and beta-triglucosyl-DAG (3-O-(beta-D-glucopyranosyl-beta-(1-&gt;6)-D-glucopyranosyl-beta-(1-&gt;6)-D-glucopyranosyl)-1,2-diacyl-sn-glycerol). Beta-diglucosyl-DAG is the predominant glycolipid found in Bacillales and is also used as a membrane anchor for lipoteichoic acid (LTA). The protein is Processive diacylglycerol beta-glucosyltransferase of Bacillus cereus (strain AH187).